The following is a 324-amino-acid chain: MKQVNGQKLLDSLGSGVAAIRGRLTPDAPMDRVTWFRAGGLAELMFQPHDTDDLVAFLKLVPEEVPVMVVGVGSNLLVRDGGIPGVVIRLSAKGFGDLELAGENRIKAGAICPDKNIAAMALDHGIGGFYFYYGIPGSIGGALRMNAGANSGETSERVVEVHAVDRKGNRHVLSKAEMGYGYRHSGAAKELIFTHAIFEGYAEDKTKIRTDMDAVRQHRETVQPIREKTGGSTFKNPDGHSAWKLIDEAGCRGMMIGNAQMSPLHCNFMINTGQATGYELEYLGETVRQRVMEHSGVKLEWEIKRVGNFMPGYEIREFLGRATA.

The FAD-binding PCMH-type domain occupies 36-203 (FRAGGLAELM…THAIFEGYAE (168 aa)). Arginine 183 is a catalytic residue. Serine 232 acts as the Proton donor in catalysis. The active site involves glutamate 302.

Belongs to the MurB family. Requires FAD as cofactor.

It is found in the cytoplasm. It carries out the reaction UDP-N-acetyl-alpha-D-muramate + NADP(+) = UDP-N-acetyl-3-O-(1-carboxyvinyl)-alpha-D-glucosamine + NADPH + H(+). Its pathway is cell wall biogenesis; peptidoglycan biosynthesis. Its function is as follows. Cell wall formation. The protein is UDP-N-acetylenolpyruvoylglucosamine reductase of Rhizobium meliloti (strain 1021) (Ensifer meliloti).